The sequence spans 427 residues: Trigger factor (427 aa).

The PPIase FKBP-type domain occupies 163–248 (GDTVVIDFVG…IHEVKTKEVP (86 aa)).

It belongs to the FKBP-type PPIase family. Tig subfamily.

It localises to the cytoplasm. The enzyme catalyses [protein]-peptidylproline (omega=180) = [protein]-peptidylproline (omega=0). Its function is as follows. Involved in protein export. Acts as a chaperone by maintaining the newly synthesized protein in an open conformation. Functions as a peptidyl-prolyl cis-trans isomerase. The sequence is that of Trigger factor (tig) from Streptococcus pyogenes serotype M1.